The following is a 1037-amino-acid chain: Multidrug resistance protein MdtF (1037 aa).

Over 1-9 (MANYFIDRP) the chain is Cytoplasmic. The helical transmembrane segment at 10–30 (VFAWVLAIIMMLAGGLAIMNL) threads the bilayer. The Periplasmic portion of the chain corresponds to 31-338 (PVAQYPQIAP…TTPFIEISIQ (308 aa)). Residues 339-359 (EVFKTLVEAIILVFLVMYLFL) traverse the membrane as a helical segment. Residues 360-369 (QNFRATIIPT) are Cytoplasmic-facing. A helical transmembrane segment spans residues 370–390 (IAVPVVILGTFAILSAVGFTI). Topologically, residues 391–392 (NT) are periplasmic. A helical membrane pass occupies residues 393 to 413 (LTMFGMVLAIGLLVDDAIVVV). At 414–441 (ENVERVIAEDKLPPKEATHKSMGQIQRA) the chain is on the cytoplasmic side. A helical transmembrane segment spans residues 442-462 (LVGIAVVLSAVFMPMAFMSGA). Residues 463–471 (TGEIYRQFS) lie on the Periplasmic side of the membrane. A helical transmembrane segment spans residues 472 to 492 (ITLISSMLLSVFVAMSLTPAL). Residues 493–534 (CATILKAAPEGGHKPNALFARFNTLFEKSTQHYTDSTRSLLR) lie on the Cytoplasmic side of the membrane. Residues 535 to 555 (CTGRYMVIYLLICAGMAVLFL) form a helical membrane-spanning segment. At 556 to 870 (RTPTSFLPEE…SYQEALSSNQ (315 aa)) the chain is on the periplasmic side. Residues 871 to 891 (APALYAISLVVVFLALAALYE) traverse the membrane as a helical segment. A topological domain (cytoplasmic) is located at residue Ser-892. The helical transmembrane segment at 893–913 (WSIPFSVMLVVPLGVVGALLA) threads the bilayer. Residues 914–927 (TDLRGLSNDVYFQV) lie on the Periplasmic side of the membrane. The chain crosses the membrane as a helical span at residues 928-948 (GLLTTIGLSAKNAILIVEFAV). The Cytoplasmic segment spans residues 949 to 972 (EMMQKEGKTPIEAIIEAARMRLRP). Residues 973–993 (ILMTSLAFILGVLPLVISHGA) traverse the membrane as a helical segment. Over 994 to 1006 (GSGAQNAVGTGVM) the chain is Periplasmic. Residues 1007 to 1027 (GGMFAATVLAIYFVPVFFVVV) form a helical membrane-spanning segment. Topologically, residues 1028–1037 (EHLFARFKKA) are cytoplasmic.

The protein belongs to the resistance-nodulation-cell division (RND) (TC 2.A.6) family. Homotrimer. Part of the tripartite efflux system MdtEF-TolC, which is composed of an inner membrane transporter, MdtF, a membrane fusion protein, MdtE, and an outer membrane component, TolC. The complex forms a large protein conduit and can translocate molecules across both the inner and outer membranes.

It localises to the cell inner membrane. In terms of biological role, part of the tripartite efflux system MdtEF-TolC, which confers resistance to various compounds. This is Multidrug resistance protein MdtF (mdtF) from Escherichia coli O157:H7.